The following is a 332-amino-acid chain: Glycerol-3-phosphate dehydrogenase [NAD(P)+] (332 aa).

Residues Trp11, Arg30, and Lys108 each contribute to the NADPH site. Residues Lys108, Gly137, and Ser139 each contribute to the sn-glycerol 3-phosphate site. Ala141 is a binding site for NADPH. Positions 192, 245, 255, 256, and 257 each coordinate sn-glycerol 3-phosphate. Residue Lys192 is the Proton acceptor of the active site. Residue Arg256 coordinates NADPH. NADPH is bound by residues Val280 and Glu282.

It belongs to the NAD-dependent glycerol-3-phosphate dehydrogenase family.

The protein localises to the cytoplasm. It catalyses the reaction sn-glycerol 3-phosphate + NAD(+) = dihydroxyacetone phosphate + NADH + H(+). The enzyme catalyses sn-glycerol 3-phosphate + NADP(+) = dihydroxyacetone phosphate + NADPH + H(+). It participates in membrane lipid metabolism; glycerophospholipid metabolism. Functionally, catalyzes the reduction of the glycolytic intermediate dihydroxyacetone phosphate (DHAP) to sn-glycerol 3-phosphate (G3P), the key precursor for phospholipid synthesis. This Paraburkholderia phymatum (strain DSM 17167 / CIP 108236 / LMG 21445 / STM815) (Burkholderia phymatum) protein is Glycerol-3-phosphate dehydrogenase [NAD(P)+].